The sequence spans 92 residues: Small ribosomal subunit protein uS19 (92 aa).

This sequence belongs to the universal ribosomal protein uS19 family.

Functionally, protein S19 forms a complex with S13 that binds strongly to the 16S ribosomal RNA. In Vibrio campbellii (strain ATCC BAA-1116), this protein is Small ribosomal subunit protein uS19.